The chain runs to 1012 residues: Axonemal dynein light chain domain-containing protein 1 (1012 aa).

A compositionally biased stretch (low complexity) spans 1–17 (MSLPKTPSTPLNSTSTS). The interval 1 to 34 (MSLPKTPSTPLNSTSTSESKKLKVSVAKEGTRGL) is disordered. Coiled-coil stretches lie at residues 317-402 (QRIL…IWSS), 447-486 (EDLA…IVKD), and 572-597 (SERQ…RING). Over residues 841-854 (PEIDESFKEDEEES) the composition is skewed to acidic residues. Disordered stretches follow at residues 841–879 (PEID…TEKE) and 963–1012 (LEEL…KKGH). Composition is skewed to basic and acidic residues over residues 855–879 (KEDR…TEKE) and 963–987 (LEEL…REVK). The span at 988–997 (EEEEQQEEEE) shows a compositional bias: acidic residues.

As to expression, highly expressed in testis. Highly expressed in the round and late spermatids.

It is found in the cytoplasm. May be essential for spermiogenesis and male fertility probably by regulating the manchette dynamics, spermatid head shaping and sperm flagellum assembly. The sequence is that of Axonemal dynein light chain domain-containing protein 1 from Homo sapiens (Human).